Consider the following 245-residue polypeptide: MSLTSIPSLREQQHPLIRQLADCIEEVWHQHLDLSPYHLPAELGYVEGRLEGEKLTIENRCYQTPQFRKMHLELAKVGNMLDILHCVMFPRPEYDLPMFGCDLVGGRGQISAAIADLSPVHLDRTLPASYNSALTNLDTLNFSQPRELPEWGNIFSDFCIFVRPSSPEEEAMFLGRVREFLQVHCQGAIAASPVSAEQKQHILAGQHNYCSKQQQNDKTRRVLEKAFGTDWAENYMTTVLFDLPE.

It belongs to the HY2 family.

It carries out the reaction (2R,3Z)-phycocyanobilin + 4 oxidized [2Fe-2S]-[ferredoxin] = biliverdin IXalpha + 4 reduced [2Fe-2S]-[ferredoxin] + 4 H(+). In terms of biological role, catalyzes the four-electron reduction of biliverdin IX-alpha (2-electron reduction at both the A and D rings); the reaction proceeds via an isolatable 2-electron intermediate, 181,182-dihydrobiliverdin. The polypeptide is Phycocyanobilin:ferredoxin oxidoreductase (Trichormus variabilis (strain ATCC 29413 / PCC 7937) (Anabaena variabilis)).